A 321-amino-acid polypeptide reads, in one-letter code: Methionyl-tRNA formyltransferase (321 aa).

(6S)-5,6,7,8-tetrahydrofolate is bound at residue 112–115 (SILP).

It belongs to the Fmt family.

It carries out the reaction L-methionyl-tRNA(fMet) + (6R)-10-formyltetrahydrofolate = N-formyl-L-methionyl-tRNA(fMet) + (6S)-5,6,7,8-tetrahydrofolate + H(+). Its function is as follows. Attaches a formyl group to the free amino group of methionyl-tRNA(fMet). The formyl group appears to play a dual role in the initiator identity of N-formylmethionyl-tRNA by promoting its recognition by IF2 and preventing the misappropriation of this tRNA by the elongation apparatus. The chain is Methionyl-tRNA formyltransferase from Shewanella pealeana (strain ATCC 700345 / ANG-SQ1).